A 67-amino-acid polypeptide reads, in one-letter code: Large ribosomal subunit protein bL35 (67 aa).

A disordered region spans residues 22–52; that stretch reads VLAGPGKKRHNLSARSQKAKRQNRGSQVLTH. Basic residues predominate over residues 27–44; it reads GKKRHNLSARSQKAKRQN.

This sequence belongs to the bacterial ribosomal protein bL35 family.

The protein is Large ribosomal subunit protein bL35 of Granulibacter bethesdensis (strain ATCC BAA-1260 / CGDNIH1).